Here is a 236-residue protein sequence, read N- to C-terminus: MTRRYWNINLEEMLEAGVHFGHGTRKWNPRMAPYISAKRKGIHITNLTRTARSLSEACDLVFDAASRGKHFLIVGTKDKAADSVASAAIRARCHYVNKKWLGGMLTNWFTTETRLHKFRDLRAEQKTGRLNRLPKRDAAMLKRKLSHLQAYLGGIKYMTGLPDIVIIIDQQEEYTAIRECATLGIPTICLIDTNCDPDLADIPIPANDDAIASIRLILNKLVSAICEGRSSYIRNH.

The protein belongs to the universal ribosomal protein uS2 family.

Its subcellular location is the plastid. It localises to the chloroplast. The polypeptide is Small ribosomal subunit protein uS2c (rps2) (Illicium oligandrum (Star anise)).